Reading from the N-terminus, the 605-residue chain is DNA primase (605 aa).

The segment at 38-62 adopts a CHC2-type zinc-finger fold; that stretch reads CPFHDEKTPSFTVSEDKQICHCFGC. One can recognise a Toprim domain in the interval 260–341; it reads DEIVLLEGFM…NVFVIQLPSG (82 aa). Positions 266, 310, and 312 each coordinate Mg(2+).

Belongs to the DnaG primase family. As to quaternary structure, monomer. Interacts with DnaB. It depends on Zn(2+) as a cofactor. Requires Mg(2+) as cofactor.

The enzyme catalyses ssDNA + n NTP = ssDNA/pppN(pN)n-1 hybrid + (n-1) diphosphate.. Functionally, RNA polymerase that catalyzes the synthesis of short RNA molecules used as primers for DNA polymerase during DNA replication. The polypeptide is DNA primase (Staphylococcus aureus).